The following is a 562-amino-acid chain: Tetratricopeptide repeat protein 39A (562 aa).

TPR repeat units lie at residues 273–306, 463–496, and 504–537; these read AIFLFFAGRIEEIKGNIDEAISRFEECCESQQNW, CVVKLLKGLCYKYLGRIPEAVESFSYIQLNEKRI, and PNAMLELALLYLQLEKKEEALRLLENAKNNYKNY.

The protein belongs to the TTC39 family.

The chain is Tetratricopeptide repeat protein 39A (ttc39a) from Xenopus tropicalis (Western clawed frog).